The primary structure comprises 237 residues: MGKNEQKDPNVYFFVPNLIGFTRVFLVLISLYFMSWHPNYCTIVYLYSSLLDAFDGWAARKLHQATNFGAILDMVTDRCATSCLLCFLCAAYPKYAIIFQLLVSLDLASHYMHMYSTLHQGASSHKTVTKKHNWMLRLYYGNNKVLFIFCAANEMFFVALYLLSFTPRTPPKLGYLPVPSFIYSTGELPLSYPTLLAVLCGPICLAKQIINVVQLVNAANALVKMDVEQRRAAKKLQ.

The Cytoplasmic portion of the chain corresponds to 1-12 (MGKNEQKDPNVY). Residues 13-33 (FFVPNLIGFTRVFLVLISLYF) traverse the membrane as a helical segment. Residues 34–41 (MSWHPNYC) are Lumenal-facing. A helical membrane pass occupies residues 42 to 62 (TIVYLYSSLLDAFDGWAARKL). The Mg(2+) site is built by Asp52 and Asp55. Gly56, Arg60, and Thr66 together coordinate a CDP-1,2-diacyl-sn-glycerol. At 63-71 (HQATNFGAI) the chain is on the cytoplasmic side. The chain crosses the membrane as a helical span at residues 72–92 (LDMVTDRCATSCLLCFLCAAY). 2 residues coordinate Mg(2+): Asp73 and Asp77. Catalysis depends on Asp77, which acts as the Proton acceptor. The Lumenal segment spans residues 93-94 (PK). A helical membrane pass occupies residues 95 to 115 (YAIIFQLLVSLDLASHYMHMY). Over 116 to 144 (STLHQGASSHKTVTKKHNWMLRLYYGNNK) the chain is Cytoplasmic. A helical membrane pass occupies residues 145-165 (VLFIFCAANEMFFVALYLLSF). Residues 166-185 (TPRTPPKLGYLPVPSFIYST) are Lumenal-facing. The chain crosses the membrane as a helical span at residues 186-206 (GELPLSYPTLLAVLCGPICLA). Residues 207 to 237 (KQIINVVQLVNAANALVKMDVEQRRAAKKLQ) lie on the Cytoplasmic side of the membrane.

It belongs to the CDP-alcohol phosphatidyltransferase class-I family. Mn(2+) is required as a cofactor. Requires Mg(2+) as cofactor.

The protein localises to the microsome membrane. It is found in the endoplasmic reticulum membrane. Its subcellular location is the golgi apparatus membrane. The protein resides in the mitochondrion outer membrane. It carries out the reaction a CDP-1,2-diacyl-sn-glycerol + myo-inositol = a 1,2-diacyl-sn-glycero-3-phospho-(1D-myo-inositol) + CMP + H(+). Functionally, catalyzes the synthesis of phosphatidylinositol (PtdIns). The protein is CDP-diacylglycerol--inositol 3-phosphatidyltransferase (pis1) of Schizosaccharomyces pombe (strain 972 / ATCC 24843) (Fission yeast).